The primary structure comprises 128 residues: Large ribosomal subunit protein uL22 (128 aa).

The protein belongs to the universal ribosomal protein uL22 family. In terms of assembly, part of the 50S ribosomal subunit.

This protein binds specifically to 23S rRNA; its binding is stimulated by other ribosomal proteins, e.g. L4, L17, and L20. It is important during the early stages of 50S assembly. It makes multiple contacts with different domains of the 23S rRNA in the assembled 50S subunit and ribosome. Functionally, the globular domain of the protein is located near the polypeptide exit tunnel on the outside of the subunit, while an extended beta-hairpin is found that lines the wall of the exit tunnel in the center of the 70S ribosome. In Rhodopseudomonas palustris (strain BisA53), this protein is Large ribosomal subunit protein uL22.